The chain runs to 737 residues: MKNNKIYLLGACLLCAVTTFAQNVSLQPPPQQLIVQNKTIDLPAVYQLNGGEEANPHAVKVLKELLSGKQSSKKGMLISIGEKGDKSVRKYSRQIPDHKEGYYLSVNEKEIVLAGNDERGTYYALQTFAQLLKDGKLPEVEIKDYPSVRYRGVVEGFYGTPWSHQARLSQLKFYGKNKMNTYIYGPKDDPYHSAPNWRLPYPDKEAAQLQELVAVANENEVDFVWAIHPGQDIKWNKEDRDLLLAKFEKMYQLGVRSFAVFFDDISGEGTNPQKQAELLNYIDEKFAQVKPDINQLVMCPTEYNKSWSNPNGNYLTTLGDKLNPSIQIMWTGDRVISDITRDGISWINERIKRPAYIWWNFPVSDYVRDHLLLGPVYGNDTTIAKEMSGFVTNPMEHAESSKIAIYSVASYAWNPAKYDTWQTWKDAIRTILPSAAEELECFAMHNSDLGPNGHGYRREESMDIQPAAERFLKAFKEGKNYDKADFETLQYTFERMKESADILLMNTENKPLIVEITPWVHQFKLTAEMGEEVLKMVEGRNESYFLRKYNHVKALQQQMFYIDQTSNQNPYQPGVKTATRVIKPLIDRTFATVVKFFNQKFNAHLDATTDYMPHKMISNVEQIKNLPLQVKANRVLISPANEVVKWAAGNSVEIELDAIYPGENIQINFGKDAPCTWGRLEISTDGKEWKTVDLKQKESRLSAGLQKAPVKFVRFTNVSDEEQQVYLRQFVLTIEKK.

A signal peptide spans 1–21 (MKNNKIYLLGACLLCAVTTFA). The tract at residues 148–433 (VRYRGVVEGF…WKDAIRTILP (286 aa)) is catalytic domain. The GH84 domain occupies 149-416 (RYRGVVEGFY…SVASYAWNPA (268 aa)). Positions 156, 187, and 263 each coordinate a protein. Residue D264 is the Proton donor of the active site. A protein-binding positions include Y303, 358–360 (WWN), D365, and N393.

It belongs to the glycosyl hydrolase 84 family. As to quaternary structure, homodimer.

It catalyses the reaction 3-O-(N-acetyl-beta-D-glucosaminyl)-L-seryl-[protein] + H2O = N-acetyl-D-glucosamine + L-seryl-[protein]. The catalysed reaction is 3-O-(N-acetyl-beta-D-glucosaminyl)-L-threonyl-[protein] + H2O = L-threonyl-[protein] + N-acetyl-D-glucosamine. With respect to regulation, inhibited by 1,2-dideoxy-2'-methyl-alpha-D-glucopyranoso-[2,1-d]-delta 2'-thiazoline (NAG-thiazoline) and O-(2-acetamido-2-deoxy-D-glucopyranosylidene)amino-N-phenyl-carbamate (PUGNAc). Not inhibited by Streptozotocin. Can hydrolyze the glycosidic link of O-GlcNAcylated proteins. Can use p-nitrophenyl-beta-GlcNAc and 4-methylumbelliferone-GlcNAc as substrates (in vitro). The chain is O-GlcNAcase BT_4395 from Bacteroides thetaiotaomicron (strain ATCC 29148 / DSM 2079 / JCM 5827 / CCUG 10774 / NCTC 10582 / VPI-5482 / E50).